The primary structure comprises 150 residues: Urease subunit beta (150 aa).

Positions 122–140 (GAVVGDSPAATPGTTGATG) are enriched in low complexity. The tract at residues 122–150 (GAVVGDSPAATPGTTGATGDLPGYLGEGS) is disordered.

Belongs to the urease beta subunit family. In terms of assembly, heterotrimer of UreA (gamma), UreB (beta) and UreC (alpha) subunits. Three heterotrimers associate to form the active enzyme.

It localises to the cytoplasm. The catalysed reaction is urea + 2 H2O + H(+) = hydrogencarbonate + 2 NH4(+). The protein operates within nitrogen metabolism; urea degradation; CO(2) and NH(3) from urea (urease route): step 1/1. The chain is Urease subunit beta from Frankia alni (strain DSM 45986 / CECT 9034 / ACN14a).